The following is a 214-amino-acid chain: Pyrrolidone-carboxylate peptidase (214 aa).

Active-site residues include Glu80, Cys143, and His166.

The protein belongs to the peptidase C15 family. As to quaternary structure, homotetramer.

The protein resides in the cytoplasm. The enzyme catalyses Release of an N-terminal pyroglutamyl group from a polypeptide, the second amino acid generally not being Pro.. In terms of biological role, removes 5-oxoproline from various penultimate amino acid residues except L-proline. The protein is Pyrrolidone-carboxylate peptidase of Enterobacter sp. (strain 638).